Here is a 107-residue protein sequence, read N- to C-terminus: MAGRSGSTDEELLRAVKAIKILYQSNPYPPPEGTRQARRNRRRRWRARQRQISAISERILTAYLGRPAEPVPLQLPPLERLHLDCSEDSGTSGTQQPQGTETGVGRS.

S5 bears the Phosphoserine; by host CK2 mark. The tract at residues 18–26 (AIKILYQSN) is homomultimerization. Disordered stretches follow at residues 24-48 (QSNP…WRAR) and 82-107 (HLDC…VGRS). The Nuclear localization signal and RNA-binding (RRE) motif lies at 34–50 (TRQARRNRRRRWRARQR). Basic residues predominate over residues 36-48 (QARRNRRRRWRAR). The Nuclear export signal and binding to XPO1 signature appears at 73–84 (LQLPPLERLHLD). Residues 88–101 (DSGTSGTQQPQGTE) are compositionally biased toward polar residues. Residue S92 is modified to Phosphoserine; by host.

It belongs to the HIV-1 REV protein family. In terms of assembly, homomultimer; when bound to the RRE. Multimeric assembly is essential for activity and may involve XPO1. Binds to human KPNB1, XPO1, TNPO1, RANBP5 and IPO7. Interacts with the viral Integrase. Interacts with human KHDRBS1. Interacts with human NAP1; this interaction decreases Rev multimerization and stimulates its activity. Interacts with human DEAD-box helicases DDX3 and DDX24; these interactions may serve for viral RNA export to the cytoplasm and packaging, respectively. Interacts with human PSIP1; this interaction may inhibit HIV-1 DNA integration by promoting dissociation of the Integrase-LEDGF/p75 complex. Post-translationally, asymmetrically arginine dimethylated at one site by host PRMT6. Methylation impairs the RNA-binding activity and export of viral RNA from the nucleus to the cytoplasm. Phosphorylated by protein kinase CK2. Presence of, and maybe binding to the N-terminus of the regulatory beta subunit of CK2 is necessary for CK2-mediated Rev's phosphorylation.

It localises to the host nucleus. The protein resides in the host nucleolus. The protein localises to the host cytoplasm. Escorts unspliced or incompletely spliced viral pre-mRNAs (late transcripts) out of the nucleus of infected cells. These pre-mRNAs carry a recognition sequence called Rev responsive element (RRE) located in the env gene, that is not present in fully spliced viral mRNAs (early transcripts). This function is essential since most viral proteins are translated from unspliced or partially spliced pre-mRNAs which cannot exit the nucleus by the pathway used by fully processed cellular mRNAs. Rev itself is translated from a fully spliced mRNA that readily exits the nucleus. Rev's nuclear localization signal (NLS) binds directly to KPNB1/Importin beta-1 without previous binding to KPNA1/Importin alpha-1. KPNB1 binds to the GDP bound form of RAN (Ran-GDP) and targets Rev to the nucleus. In the nucleus, the conversion from Ran-GDP to Ran-GTP dissociates Rev from KPNB1 and allows Rev's binding to the RRE in viral pre-mRNAs. Rev multimerization on the RRE via cooperative assembly exposes its nuclear export signal (NES) to the surface. Rev can then form a complex with XPO1/CRM1 and Ran-GTP, leading to nuclear export of the complex. Conversion from Ran-GTP to Ran-GDP mediates dissociation of the Rev/RRE/XPO1/RAN complex, so that Rev can return to the nucleus for a subsequent round of export. Beside KPNB1, also seems to interact with TNPO1/Transportin-1, RANBP5/IPO5 and IPO7/RANBP7 for nuclear import. The nucleoporin-like HRB/RIP is an essential cofactor that probably indirectly interacts with Rev to release HIV RNAs from the perinuclear region to the cytoplasm. This is Protein Rev from Human immunodeficiency virus type 1 group M subtype G (isolate SE6165) (HIV-1).